The sequence spans 201 residues: FMN-dependent NADH:quinone oxidoreductase (201 aa).

An FMN-binding site is contributed by 92 to 95 (MWNL).

This sequence belongs to the azoreductase type 1 family. In terms of assembly, homodimer. FMN is required as a cofactor.

It carries out the reaction 2 a quinone + NADH + H(+) = 2 a 1,4-benzosemiquinone + NAD(+). The enzyme catalyses N,N-dimethyl-1,4-phenylenediamine + anthranilate + 2 NAD(+) = 2-(4-dimethylaminophenyl)diazenylbenzoate + 2 NADH + 2 H(+). Its function is as follows. Quinone reductase that provides resistance to thiol-specific stress caused by electrophilic quinones. Functionally, also exhibits azoreductase activity. Catalyzes the reductive cleavage of the azo bond in aromatic azo compounds to the corresponding amines. The protein is FMN-dependent NADH:quinone oxidoreductase of Caldicellulosiruptor saccharolyticus (strain ATCC 43494 / DSM 8903 / Tp8T 6331).